The following is a 447-amino-acid chain: Ribosomal protein uS12 methylthiotransferase RimO (447 aa).

In terms of domain architecture, MTTase N-terminal spans 6–122 (EKVSMVSLGC…IAEIIEEKSS (117 aa)). 6 residues coordinate [4Fe-4S] cluster: cysteine 15, cysteine 51, cysteine 85, cysteine 160, cysteine 164, and cysteine 167. The Radical SAM core domain maps to 146-376 (SSPAYTAYLK…MKAQARVSFK (231 aa)). Residues 379–447 (RRLIDTEEQV…DYDLIGEIIS (69 aa)) form the TRAM domain.

This sequence belongs to the methylthiotransferase family. RimO subfamily. [4Fe-4S] cluster is required as a cofactor.

The protein resides in the cytoplasm. It carries out the reaction L-aspartate(89)-[ribosomal protein uS12]-hydrogen + (sulfur carrier)-SH + AH2 + 2 S-adenosyl-L-methionine = 3-methylsulfanyl-L-aspartate(89)-[ribosomal protein uS12]-hydrogen + (sulfur carrier)-H + 5'-deoxyadenosine + L-methionine + A + S-adenosyl-L-homocysteine + 2 H(+). Functionally, catalyzes the methylthiolation of an aspartic acid residue of ribosomal protein uS12. This Geobacter sulfurreducens (strain ATCC 51573 / DSM 12127 / PCA) protein is Ribosomal protein uS12 methylthiotransferase RimO.